Consider the following 253-residue polypeptide: Tetraspanin-11 (253 aa).

4 helical membrane passes run L19–I39, V63–I83, Y93–V113, and L220–L240.

This sequence belongs to the tetraspanin (TM4SF) family.

Its subcellular location is the membrane. The sequence is that of Tetraspanin-11 (Tspan11) from Rattus norvegicus (Rat).